The sequence spans 206 residues: Tumor protein D54 (206 aa).

Methionine 1 carries the post-translational modification N-acetylmethionine. Polar residues predominate over residues 1 to 14 (MDSAGQDINLNSPN). The tract at residues 1–24 (MDSAGQDINLNSPNKGLLSDSMTD) is disordered. Phosphoserine is present on residues serine 3, serine 12, serine 19, and serine 21. Residues 38-82 (VEGLTEAEEEELRAELTKVEEEIVTLRQVLAAKERHCGELKRRLG) are a coiled coil. Residues serine 96, serine 149, and serine 161 each carry the phosphoserine modification. The residue at position 163 (threonine 163) is a Phosphothreonine. Position 166 is a phosphoserine (serine 166). Phosphothreonine is present on threonine 173. Residues 175–185 (KSKVVGDRENG) are compositionally biased toward basic and acidic residues. Residues 175–206 (KSKVVGDRENGSDSLPSSAGSGDKPLSDPAPF) form a disordered region. Residues serine 192 and serine 195 each carry the phosphoserine modification.

The protein belongs to the TPD52 family. In terms of assembly, forms a homodimer or heterodimer with other members of the family. Interacts with MAL2.

The sequence is that of Tumor protein D54 (TPD52L2) from Pongo abelii (Sumatran orangutan).